We begin with the raw amino-acid sequence, 72 residues long: UPF0270 protein YheU (72 aa).

The protein belongs to the UPF0270 family.

This is UPF0270 protein YheU from Escherichia fergusonii (strain ATCC 35469 / DSM 13698 / CCUG 18766 / IAM 14443 / JCM 21226 / LMG 7866 / NBRC 102419 / NCTC 12128 / CDC 0568-73).